Consider the following 579-residue polypeptide: Laccase-24 (579 aa).

The signal sequence occupies residues 1 to 23 (MARSWSLLLLPFALALVASVAQA). Plastocyanin-like domains are found at residues 31-148 (NVGN…PRGG) and 159-322 (EEVV…YGGG). N-linked (GlcNAc...) asparagine glycans are attached at residues N34 and N78. Residues H82 and H84 each coordinate Cu cation. 2 N-linked (GlcNAc...) asparagine glycosylation sites follow: N110 and N116. Cu cation contacts are provided by H127 and H129. Residues N204, N209, N219, N241, N312, N337, N348, N398, N405, N444, and N462 are each glycosylated (N-linked (GlcNAc...) asparagine). A Plastocyanin-like 3 domain is found at 425–563 (DFPDTPPIVF…GMVFEVQNGP (139 aa)). H480, H483, and H485 together coordinate Cu cation. N-linked (GlcNAc...) asparagine glycosylation occurs at N500. Residues H542, C543, H544, and H548 each coordinate Cu cation.

This sequence belongs to the multicopper oxidase family. Cu cation is required as a cofactor.

It localises to the secreted. It is found in the extracellular space. Its subcellular location is the apoplast. It catalyses the reaction 4 hydroquinone + O2 = 4 benzosemiquinone + 2 H2O. Lignin degradation and detoxification of lignin-derived products. The sequence is that of Laccase-24 (LAC24) from Oryza sativa subsp. japonica (Rice).